Reading from the N-terminus, the 438-residue chain is SPbeta prophage-derived uncharacterized protein YopA (438 aa).

A helical membrane pass occupies residues 391–411 (LHVLYLGVWYLELLTLGILGY).

The protein localises to the cell membrane. This Bacillus subtilis (strain 168) protein is SPbeta prophage-derived uncharacterized protein YopA (yopA).